We begin with the raw amino-acid sequence, 344 residues long: Phenylalanine--tRNA ligase alpha subunit (344 aa).

Glutamate 256 provides a ligand contact to Mg(2+).

The protein belongs to the class-II aminoacyl-tRNA synthetase family. Phe-tRNA synthetase alpha subunit type 1 subfamily. Tetramer of two alpha and two beta subunits. Mg(2+) serves as cofactor.

It is found in the cytoplasm. It carries out the reaction tRNA(Phe) + L-phenylalanine + ATP = L-phenylalanyl-tRNA(Phe) + AMP + diphosphate + H(+). The polypeptide is Phenylalanine--tRNA ligase alpha subunit (Geobacillus thermodenitrificans (strain NG80-2)).